The sequence spans 194 residues: dCTP deaminase (194 aa).

DCTP is bound by residues 110–115, Asp128, 136–138, Tyr171, Lys178, and Gln182; these read RSSLAR and VLE. Residue Glu138 is the Proton donor/acceptor of the active site.

The protein belongs to the dCTP deaminase family. Homotrimer.

The enzyme catalyses dCTP + H2O + H(+) = dUTP + NH4(+). It participates in pyrimidine metabolism; dUMP biosynthesis; dUMP from dCTP (dUTP route): step 1/2. In terms of biological role, catalyzes the deamination of dCTP to dUTP. The polypeptide is dCTP deaminase (Histophilus somni (strain 2336) (Haemophilus somnus)).